The sequence spans 1205 residues: Nitric oxide synthase 3 (1205 aa).

The disordered stretch occupies residues 1–73 (MGNLKSVGQE…PPDGPKFPRV (73 aa)). Residue Gly-2 is the site of N-myristoyl glycine attachment. 2 S-palmitoyl cysteine lipidation sites follow: Cys-15 and Cys-26. Over residues 15–27 (CGLGLGLGLGLCG) the composition is skewed to gly residues. Over residues 44–54 (LAPPPSPPPAP) the composition is skewed to pro residues. The Zn(2+) site is built by Cys-96 and Cys-101. The tract at residues 100-488 (RCLGSLVFPR…TDPWKGSASK (389 aa)) is interaction with NOSIP. Position 104 (Ser-104) interacts with (6R)-L-erythro-5,6,7,8-tetrahydrobiopterin. Position 116 is a phosphoserine; by CDK5 (Ser-116). Heme b is bound at residue Cys-186. L-arginine contacts are provided by Gln-249, Trp-358, Tyr-359, Glu-363, and Asn-368. Residues Ala-448, Trp-449, and Phe-462 each contribute to the (6R)-L-erythro-5,6,7,8-tetrahydrobiopterin site. Tyr-477 contacts heme b. The calmodulin-binding stretch occupies residues 492–512 (VTRKKTFKEVANAVKISASLM). A Phosphothreonine; by AMPK modification is found at Thr-497. The 184-residue stretch at 522–705 (ATILYGSETG…AFGGWAQAAF (184 aa)) folds into the Flavodoxin-like domain. FMN is bound by residues Ser-528, Glu-529, Thr-530, Arg-532, Ser-574, and Thr-575. Phosphoserine occurs at positions 617, 635, and 640. Positions 656, 663, 689, and 693 each coordinate FMN. Positions 758-1004 (RKMVQATVLA…IRGAPSFRLP (247 aa)) constitute an FAD-binding FR-type domain. Arg-778 contacts NADP(+). His-800 is an FAD binding site. The segment at 819–850 (VEDPPPPGEPVAVEQLEKGSPGGPPPSWVRDP) is disordered. Residue Ser-838 is modified to Phosphoserine. 9 residues coordinate FAD: Arg-940, Tyr-942, Ser-943, Thr-958, Ala-960, Tyr-964, Val-977, Cys-978, and Ser-979. Residues Thr-1018, Arg-1051, Ser-1080, Arg-1081, Lys-1087, Tyr-1089, and Gln-1091 each contribute to the NADP(+) site. Residue Thr-1177 is modified to Phosphothreonine. Ser-1179 carries the post-translational modification Phosphoserine; by AMPK. Residue Ser-1181 is modified to Phosphoserine.

Belongs to the NOS family. As to quaternary structure, homodimer. Interacts with NOSIP and NOSTRIN. Interacts with HSP90AB1. Forms a complex with ASL, ASS1 and SLC7A1; the complex regulates cell-autonomous L-arginine synthesis and citrulline recycling while channeling extracellular L-arginine to nitric oxide synthesis pathway. It depends on heme b as a cofactor. FAD is required as a cofactor. Requires FMN as cofactor. (6R)-L-erythro-5,6,7,8-tetrahydrobiopterin serves as cofactor. In terms of processing, phosphorylation by AMPK at Ser-1179 in the presence of Ca(2+)-calmodulin (CaM) activates activity. In absence of Ca(2+)-calmodulin, AMPK also phosphorylates Thr-497, resulting in inhibition of activity. Phosphorylation of Ser-116 by CDK5 reduces activity.

It is found in the membrane. The protein localises to the caveola. It localises to the cytoplasm. Its subcellular location is the cytoskeleton. The protein resides in the golgi apparatus. It is found in the cell membrane. It catalyses the reaction 2 L-arginine + 3 NADPH + 4 O2 + H(+) = 2 L-citrulline + 2 nitric oxide + 3 NADP(+) + 4 H2O. Stimulated by calcium/calmodulin. Inhibited by NOSIP and NOSTRIN. In terms of biological role, produces nitric oxide (NO) which is implicated in vascular smooth muscle relaxation through a cGMP-mediated signal transduction pathway. NO mediates vascular endothelial growth factor (VEGF)-induced angiogenesis in coronary vessels and promotes blood clotting through the activation of platelets. This is Nitric oxide synthase 3 (NOS3) from Canis lupus familiaris (Dog).